The sequence spans 774 residues: 5-methyltetrahydropteroyltriglutamate--homocysteine methyltransferase (774 aa).

5-methyltetrahydropteroyltri-L-glutamate contacts are provided by residues 24 to 27 (RELK) and lysine 120. L-homocysteine is bound by residues 446–448 (IGS) and glutamate 499. Residues 446–448 (IGS) and glutamate 499 each bind L-methionine. Tryptophan 576 is a 5-methyltetrahydropteroyltri-L-glutamate binding site. Residue aspartate 614 participates in L-homocysteine binding. Residue aspartate 614 participates in L-methionine binding. Residue glutamate 620 coordinates 5-methyltetrahydropteroyltri-L-glutamate. Zn(2+)-binding residues include histidine 656, cysteine 658, and glutamate 680. Histidine 709 (proton donor) is an active-site residue. A Zn(2+)-binding site is contributed by cysteine 741.

The protein belongs to the vitamin-B12 independent methionine synthase family. The cofactor is Zn(2+).

The catalysed reaction is 5-methyltetrahydropteroyltri-L-glutamate + L-homocysteine = tetrahydropteroyltri-L-glutamate + L-methionine. It participates in amino-acid biosynthesis; L-methionine biosynthesis via de novo pathway; L-methionine from L-homocysteine (MetE route): step 1/1. In terms of biological role, catalyzes the transfer of a methyl group from 5-methyltetrahydrofolate to homocysteine resulting in methionine formation. The protein is 5-methyltetrahydropteroyltriglutamate--homocysteine methyltransferase of Streptomyces griseus subsp. griseus (strain JCM 4626 / CBS 651.72 / NBRC 13350 / KCC S-0626 / ISP 5235).